Reading from the N-terminus, the 183-residue chain is Regulatory protein RecX (183 aa).

The span at 1–12 (MTSFPHPSTSES) shows a compositional bias: polar residues. Residues 1–26 (MTSFPHPSTSESGPDPDSEPNREEQA) form a disordered region.

The protein belongs to the RecX family.

It is found in the cytoplasm. Its function is as follows. Modulates RecA activity. The sequence is that of Regulatory protein RecX from Mycobacterium sp. (strain KMS).